The chain runs to 81 residues: Small cysteine-rich protein 1 2 (81 aa).

A signal peptide spans 1–19; it reads MGVNFNICLLLLLVATISS. The propeptide occupies 20–39; sequence QPLKATEKDDSTDENPFGIY.

It belongs to the Cnidaria small cysteine-rich protein (SCRiP) family. alpha subfamily. Post-translationally, the basic myotoxic domain of rattlesnake crotamine toxins (with 6 Cys residues) has been detected in this protein. However, this protein contains 2 additional Cys at the C-terminal region. Hence, this protein may contain 4 disulfide bonds instead of the 3 suggested by the myotoxin domain.

It is found in the secreted. It localises to the nematocyst. Its function is as follows. Induces neurotoxic symptoms on zebrafish. Has also been claimed to be implied in calcification, but tests on homolog proteins suggest that proteins of this family have a neurotoxic function and not a calcification function. In Montipora capitata (Rice coral), this protein is Small cysteine-rich protein 1 2.